The following is a 558-amino-acid chain: Dihydroxy-acid dehydratase (558 aa).

[2Fe-2S] cluster is bound at residue C54. D86 is a Mg(2+) binding site. C127 is a [2Fe-2S] cluster binding site. 2 residues coordinate Mg(2+): D128 and K129. The residue at position 129 (K129) is an N6-carboxylysine. C199 provides a ligand contact to [2Fe-2S] cluster. Residue E448 coordinates Mg(2+). S474 (proton acceptor) is an active-site residue.

The protein belongs to the IlvD/Edd family. As to quaternary structure, homodimer. It depends on [2Fe-2S] cluster as a cofactor. Mg(2+) serves as cofactor.

It carries out the reaction (2R)-2,3-dihydroxy-3-methylbutanoate = 3-methyl-2-oxobutanoate + H2O. The enzyme catalyses (2R,3R)-2,3-dihydroxy-3-methylpentanoate = (S)-3-methyl-2-oxopentanoate + H2O. It participates in amino-acid biosynthesis; L-isoleucine biosynthesis; L-isoleucine from 2-oxobutanoate: step 3/4. Its pathway is amino-acid biosynthesis; L-valine biosynthesis; L-valine from pyruvate: step 3/4. Its function is as follows. Functions in the biosynthesis of branched-chain amino acids. Catalyzes the dehydration of (2R,3R)-2,3-dihydroxy-3-methylpentanoate (2,3-dihydroxy-3-methylvalerate) into 2-oxo-3-methylpentanoate (2-oxo-3-methylvalerate) and of (2R)-2,3-dihydroxy-3-methylbutanoate (2,3-dihydroxyisovalerate) into 2-oxo-3-methylbutanoate (2-oxoisovalerate), the penultimate precursor to L-isoleucine and L-valine, respectively. The sequence is that of Dihydroxy-acid dehydratase from Acidothermus cellulolyticus (strain ATCC 43068 / DSM 8971 / 11B).